Reading from the N-terminus, the 185-residue chain is Peptide deformylase (185 aa).

Residues Cys98 and His140 each contribute to the Fe cation site. The active site involves Glu141. Fe cation is bound at residue His144.

The protein belongs to the polypeptide deformylase family. It depends on Fe(2+) as a cofactor.

The catalysed reaction is N-terminal N-formyl-L-methionyl-[peptide] + H2O = N-terminal L-methionyl-[peptide] + formate. Functionally, removes the formyl group from the N-terminal Met of newly synthesized proteins. Requires at least a dipeptide for an efficient rate of reaction. N-terminal L-methionine is a prerequisite for activity but the enzyme has broad specificity at other positions. This Parabacteroides distasonis (strain ATCC 8503 / DSM 20701 / CIP 104284 / JCM 5825 / NCTC 11152) protein is Peptide deformylase.